We begin with the raw amino-acid sequence, 352 residues long: Selenide, water dikinase (352 aa).

Cysteine 23 is an active-site residue. ATP-binding positions include lysine 26 and 54 to 56; that span reads SRD. Residue aspartate 57 participates in Mg(2+) binding. Residues aspartate 74, aspartate 97, and 145–147 contribute to the ATP site; that span reads GHS. Aspartate 97 is a Mg(2+) binding site. Aspartate 233 serves as a coordination point for Mg(2+).

The protein belongs to the selenophosphate synthase 1 family. Class I subfamily. In terms of assembly, homodimer. Mg(2+) serves as cofactor.

It carries out the reaction hydrogenselenide + ATP + H2O = selenophosphate + AMP + phosphate + 2 H(+). In terms of biological role, synthesizes selenophosphate from selenide and ATP. The polypeptide is Selenide, water dikinase (Shewanella putrefaciens (strain CN-32 / ATCC BAA-453)).